The chain runs to 328 residues: Malate dehydrogenase 1 (328 aa).

NAD(+) is bound at residue 12–18 (GAAGQIG). 2 residues coordinate substrate: Arg95 and Arg101. NAD(+)-binding positions include Asn108, Gln115, and 132–134 (VGN). Residues Asn134 and Arg165 each coordinate substrate. His190 acts as the Proton acceptor in catalysis.

Belongs to the LDH/MDH superfamily. MDH type 2 family.

It carries out the reaction (S)-malate + NAD(+) = oxaloacetate + NADH + H(+). Functionally, catalyzes the reversible oxidation of malate to oxaloacetate. The polypeptide is Malate dehydrogenase 1 (Albidiferax ferrireducens (strain ATCC BAA-621 / DSM 15236 / T118) (Rhodoferax ferrireducens)).